The following is a 1037-amino-acid chain: Ephrin type-A receptor 5 (1037 aa).

Residues Met-1 to Thr-24 form the signal peptide. The interval Met-1–Thr-24 is disordered. Topologically, residues Pro-25–Pro-573 are extracellular. The Eph LBD domain maps to Glu-60–Arg-238. Asn-264, Asn-299, Asn-369, Asn-423, Asn-436, and Asn-461 each carry an N-linked (GlcNAc...) asparagine glycan. 2 consecutive Fibronectin type-III domains span residues Pro-357 to Ala-467 and Ala-468 to Val-562. A helical membrane pass occupies residues Val-574–Leu-594. Residues Ser-595–Leu-1037 are Cytoplasmic-facing. Residues Tyr-650 and Tyr-656 each carry the phosphotyrosine; by autocatalysis modification. The Protein kinase domain maps to Ile-675–Ile-936. ATP contacts are provided by residues Ile-681–Val-689 and Lys-707. The Proton acceptor role is filled by Asp-800. Phosphotyrosine; by autocatalysis occurs at positions 833 and 982. The region spanning Gly-965–Gln-1029 is the SAM domain. The PDZ-binding motif lies at Val-1035–Leu-1037.

The protein belongs to the protein kinase superfamily. Tyr protein kinase family. Ephrin receptor subfamily. As to quaternary structure, heterotetramer upon binding of the ligand. The heterotetramer is composed of an ephrin dimer and a receptor dimer. Oligomerization is probably required to induce biological responses. Interacts (via SAM domain) with SAMD5 (via SAM domain). In terms of processing, phosphorylated. Phosphorylation is stimulated by the ligand EFNA5. Dephosphorylation upon stimulation by glucose, inhibits EPHA5 forward signaling and results in insulin secretion. In terms of tissue distribution, almost exclusively expressed in the nervous system in cortical neurons, cerebellar Purkinje cells and pyramidal neurons within the cortex and hippocampus. Display an increasing gradient of expression from the forebrain to hindbrain and spinal cord.

Its subcellular location is the cell membrane. It localises to the cell projection. It is found in the axon. The protein resides in the dendrite. It catalyses the reaction L-tyrosyl-[protein] + ATP = O-phospho-L-tyrosyl-[protein] + ADP + H(+). Its function is as follows. Receptor tyrosine kinase which binds promiscuously GPI-anchored ephrin-A family ligands residing on adjacent cells, leading to contact-dependent bidirectional signaling into neighboring cells. The signaling pathway downstream of the receptor is referred to as forward signaling while the signaling pathway downstream of the ephrin ligand is referred to as reverse signaling. Among GPI-anchored ephrin-A ligands, EFNA5 most probably constitutes the cognate/functional ligand for EPHA5. Functions as an axon guidance molecule during development and may be involved in the development of the retinotectal, entorhino-hippocampal and hippocamposeptal pathways. Together with EFNA5 plays also a role in synaptic plasticity in adult brain through regulation of synaptogenesis. In addition to its function in the nervous system, the interaction of EPHA5 with EFNA5 mediates communication between pancreatic islet cells to regulate glucose-stimulated insulin secretion. This chain is Ephrin type-A receptor 5 (EPHA5), found in Homo sapiens (Human).